The primary structure comprises 360 residues: MTVSKYNGVASTFNGVARRFDFAPLEADKLNWYPRSALPPEIPAIDLNKVNTEEELAQFLVDIRKSGLFYIVDHGIPEEISIGCYNAFREFCNLPEEAREKYNTDESFKSGGYVPFKGTSIGGGNLFERQKDFVVKFFWRGPSVVNRSPNDRFAEFHDEHHRKTAELAEKIITTILKALKTRFPEFHPDELKDNINVRNMFFSNRIYPEAPPDDGEKADYRLVPHRDLSFITLANQVPANNGFKGLFILTGDGEKIPVPPIRNSYLVFIGQGLSYLTNKYLPAALHGVDFPDNTNFEGSERASLISFYEPNDYMMPSKNINPLPEEIFEKSCTFYDDVGVGRAGTTYNYVRYKFHEGYYL.

The region spanning 200–310 is the Fe2OG dioxygenase domain; sequence MFFSNRIYPE…RASLISFYEP (111 aa). Residues H225, D227, and H286 each coordinate Fe cation. R301 lines the 2-oxoglutarate pocket.

The protein belongs to the iron/ascorbate-dependent oxidoreductase family. The cofactor is Fe(2+).

The enzyme catalyses prekainate + 2-oxoglutarate + O2 = kainate + succinate + CO2 + H2O. The catalysed reaction is prekainate + 2-oxoglutarate + O2 + H(+) = kainate lactone + succinate + CO2 + H2O. The protein operates within secondary metabolite biosynthesis. Inhibited by the iron chelator EDTA. Its function is as follows. Iron/ascorbate-dependent oxidoreductase: part of the gene cluster that mediates the biosynthesis of kainic acid (KA) and derivatives, natural products with neurochemical activity acting as ionotropic glutamate receptor (iGluR) agonists, thus being neurotoxins. Catalyzes the conversion of prekainic acid to kainic acid and kainic acid lactone. The chain is Alpha-ketoglutarate dependent kainoid synthase from Digenea simplex (Marine red alga).